The sequence spans 504 residues: WD repeat-containing protein 55 homolog (504 aa).

Acidic residues predominate over residues 32–49; that stretch reads QEVVNESDSEIGEYDLGD. The interval 32–135 is disordered; sequence QEVVNESDSE…NAFDMDEDDE (104 aa). The segment covering 66–76 has biased composition (polar residues); that stretch reads DSISSDGSFNP. Acidic residues predominate over residues 77-95; sequence NDEDSDTDSDDSMLDEPDE. The segment covering 114–124 has biased composition (polar residues); it reads SGSSNRNQDSD. WD repeat units lie at residues 158-197, 202-241, 245-283, 286-325, 328-367, and 412-451; these read KLED…NKLL, VHAK…LKKL, AHDD…SIFE, EIED…LYVQ, PYEE…YHCD, and QHNM…DFGD. Positions 484-504 are disordered; sequence AKEDNNDNENDDATAGPSNTT.

This sequence belongs to the WD repeat WDR55 family.

The protein is WD repeat-containing protein 55 homolog of Drosophila willistoni (Fruit fly).